Consider the following 942-residue polypeptide: MORC family CW-type zinc finger protein 3 (942 aa).

Glycyl lysine isopeptide (Lys-Gly) (interchain with G-Cter in SUMO2) cross-links involve residues Lys191, Lys205, Lys280, and Lys293. A nuclear matrix binding region spans residues 326–353; that stretch reads AYEKVGCQLKANNMGVGVVGIIECNFLK. A CW-type zinc finger spans residues 404-454; that stretch reads KRPDQTWVQCDACLKWRKLPDGIDQLPEKWYCSNNPDPQFRNCEVPEEPED. The Zn(2+) site is built by Cys413, Cys416, Cys435, and Cys446. The interval 503-594 is RNA binding; sequence SFSPVKESVP…ENSTPKPAVD (92 aa). Phosphoserine is present on residues Ser517 and Ser543. Lys558 participates in a covalent cross-link: Glycyl lysine isopeptide (Lys-Gly) (interchain with G-Cter in SUMO2). A Phosphoserine modification is found at Ser563. Residue Lys604 forms a Glycyl lysine isopeptide (Lys-Gly) (interchain with G-Cter in SUMO1); alternate linkage. A Glycyl lysine isopeptide (Lys-Gly) (interchain with G-Cter in SUMO2); alternate cross-link involves residue Lys604. The tract at residues 623-654 is disordered; that stretch reads PKPCVQASSTSTSTSRSDPGITVSTQTDAPGL. A compositionally biased stretch (low complexity) spans 630-639; sequence SSTSTSTSRS. Residues Lys657, Lys658, and Lys743 each participate in a glycyl lysine isopeptide (Lys-Gly) (interchain with G-Cter in SUMO1); alternate cross-link. Glycyl lysine isopeptide (Lys-Gly) (interchain with G-Cter in SUMO2); alternate cross-links involve residues Lys657, Lys658, and Lys743. Residues 696–874 adopt a coiled-coil conformation; that stretch reads SHQLQELRSE…KSTGQQAAAD (179 aa). A Phosphoserine modification is found at Ser768. Lys797 is covalently cross-linked (Glycyl lysine isopeptide (Lys-Gly) (interchain with G-Cter in SUMO1); alternate). Lys797 is covalently cross-linked (Glycyl lysine isopeptide (Lys-Gly) (interchain with G-Cter in SUMO2); alternate).

As to quaternary structure, homodimer. The sumoylated form interacts with PML (via SUMO-interacting motif). Interacts with TP53. Post-translationally, sumoylation is involved in interaction with PML and localization to PML nuclear bodies.

Its subcellular location is the nucleus. The protein resides in the nucleoplasm. It is found in the nucleus matrix. The protein localises to the PML body. It localises to the chromosome. With respect to regulation, dimerization of the ATPase domain is strictly required for the catalytic activity and binding to double-stranded DNA. Disrupting the interface between ATPase and the CW domains releases autoinhibition since the CW domain sterically impedes binding of the ATPase domain to DNA. Nuclear matrix protein which forms MORC3-NBs (nuclear bodies) via an ATP-dependent mechanism and plays a role in innate immunity by restricting different viruses through modulation of the IFN response. Mechanistically, possesses a primary antiviral function through a MORC3-regulated element that activates IFNB1, and this function is guarded by a secondary IFN-repressing function. Sumoylated MORC3-NBs associates with PML-NBs and recruits TP53 and SP100, thus regulating TP53 activity. Binds RNA in vitro. Histone methylation reader which binds to non-methylated (H3K4me0), monomethylated (H3K4me1), dimethylated (H3K4me2) and trimethylated (H3K4me3) 'Lys-4' on histone H3. The order of binding preference is H3K4me3 &gt; H3K4me2 &gt; H3K4me1 &gt; H3K4me0. In Mus musculus (Mouse), this protein is MORC family CW-type zinc finger protein 3.